Consider the following 146-residue polypeptide: MAGDSDNVSLPKATVQKMISEILDQDLMFTKDAREIIINSGIEFIMILSSMASEMADNEAKKTIAPEHVIKALEELEYNEFIPFLEEILLNFKGSQKVKETRDSKFKKSGLSEEELLRQQEELFRQSRSRLHHNSVSDPVKSEDSS.

The disordered stretch occupies residues 124 to 146 (FRQSRSRLHHNSVSDPVKSEDSS). Residues S135, S137, and S142 each carry the phosphoserine modification.

As to quaternary structure, component of the NC2 (negative cofactor 2) complex composed of BUR6 and NCB2. The NC2 complex associates with SPT15/TBP. Interacts with SPT15/TBP.

It localises to the nucleus. Functionally, component of the NC2 complex which represses RNA polymerase II transcription through binding to SPT15/TBP and thereby inhibiting the assembly of the preinitiation complex. The NC2 complex may also mediate transcriptional activation from TATA-driven promoters through association with SPT15/TBP. This is Negative cofactor 2 complex subunit beta (NCB2) from Saccharomyces cerevisiae (strain ATCC 204508 / S288c) (Baker's yeast).